Here is a 476-residue protein sequence, read N- to C-terminus: Protein transport protein Sec61 subunit alpha isoform 2 (476 aa).

At 1 to 32 (MGIKFLEVIKPFCAVLPEIQKPERKIQFREKV) the chain is on the cytoplasmic side. A helical transmembrane segment spans residues 33–53 (LWTAITLFIFLVCCQIPLFGI). Over 54–75 (MSSDSADPFYWMRVILASNRGT) the chain is Lumenal. A helical transmembrane segment spans residues 76 to 96 (LMELGISPIVTSGLIMQLLAG). Residues 97-117 (AKIIEVGDTPKDRALFNGAQK) are Cytoplasmic-facing. A helical membrane pass occupies residues 118–138 (LFGMIITIGQAIVYVMTGMYG). At 139–144 (DPAEMG) the chain is on the lumenal side. The helical transmembrane segment at 145–165 (AGICLLIIIQLFVAGLIVLLL) threads the bilayer. The Cytoplasmic portion of the chain corresponds to 166-172 (DELLQKG). A helical transmembrane segment spans residues 173–193 (YGLGSGISLFIATNICETIVW). The Lumenal portion of the chain corresponds to 194–240 (KASSPTTINTGRGTEFEGAVIALFHLLATRTDKVRALREAFYRQNLP). The helical transmembrane segment at 241-261 (NLMNLIATVFVFAVVIYFQGF) threads the bilayer. Topologically, residues 262 to 288 (RVDLPIKSARYRGQYSSYPIKLFYTSN) are cytoplasmic. Residues 289–309 (IPIILQSALVSNLYVISQMLS) form a helical membrane-spanning segment. Residues 310 to 353 (VRFSGNFLVNLLGQWADVSGGGPARSYPVGGLCYYLSPPESMGA) are Lumenal-facing. Residues 354–374 (ILEDPVHVVVYIIFMLGSCAF) traverse the membrane as a helical segment. The Cytoplasmic segment spans residues 375–420 (FSKTWIEVSGSSAKDVAKQLKEQQMVMRGHRDTSMVHELNRYIPTA). Transmembrane regions (helical) follow at residues 421–441 (AAFG…LGAI) and 442–462 (GSGT…EIFV). The Cytoplasmic portion of the chain corresponds to 463-476 (KEQAEVGGMGALFF).

The protein belongs to the SecY/SEC61-alpha family. The SEC61 channel-forming translocon complex consists of channel-forming core components SEC61A1, SEC61B and SEC61G and different auxiliary components such as SEC62 and SEC63.

The protein localises to the endoplasmic reticulum membrane. In terms of biological role, component of SEC61 channel-forming translocon complex that mediates transport of signal peptide-containing precursor polypeptides across the endoplasmic reticulum (ER). Forms a ribosome receptor and a gated pore in the ER membrane, both functions required for cotranslational translocation of nascent polypeptides. The chain is Protein transport protein Sec61 subunit alpha isoform 2 (SEC61A2) from Pongo abelii (Sumatran orangutan).